The following is a 92-amino-acid chain: uncharacterized protein (92 aa).

2 helical membrane-spanning segments follow: residues 34-54 (GLGI…FMFG) and 65-85 (LLYI…ASTV).

The protein resides in the cell membrane. This is an uncharacterized protein from Bacillus anthracis.